We begin with the raw amino-acid sequence, 552 residues long: uncharacterized protein (552 aa).

The DhaL domain occupies 8-200; that stretch reads KLFAEMIIQG…LAIVYAGFLK (193 aa).

This is an uncharacterized protein from Staphylococcus saprophyticus subsp. saprophyticus (strain ATCC 15305 / DSM 20229 / NCIMB 8711 / NCTC 7292 / S-41).